The following is a 183-amino-acid chain: UPF0398 protein LSL_0930 (183 aa).

The protein belongs to the UPF0398 family.

In Ligilactobacillus salivarius (strain UCC118) (Lactobacillus salivarius), this protein is UPF0398 protein LSL_0930.